The primary structure comprises 276 residues: NADPH-dependent 7-cyano-7-deazaguanine reductase (276 aa).

83 to 85 lines the substrate pocket; it reads IES. 85–86 serves as a coordination point for NADPH; it reads SK. Residue Cys184 is the Thioimide intermediate of the active site. Asp191 (proton donor) is an active-site residue. 223–224 lines the substrate pocket; it reads HE. Position 252 to 253 (252 to 253) interacts with NADPH; it reads RG.

This sequence belongs to the GTP cyclohydrolase I family. QueF type 2 subfamily. In terms of assembly, homodimer.

The protein resides in the cytoplasm. The catalysed reaction is 7-aminomethyl-7-carbaguanine + 2 NADP(+) = 7-cyano-7-deazaguanine + 2 NADPH + 3 H(+). The protein operates within tRNA modification; tRNA-queuosine biosynthesis. Catalyzes the NADPH-dependent reduction of 7-cyano-7-deazaguanine (preQ0) to 7-aminomethyl-7-deazaguanine (preQ1). The protein is NADPH-dependent 7-cyano-7-deazaguanine reductase of Pseudomonas putida (strain W619).